We begin with the raw amino-acid sequence, 101 residues long: NAD(P)H-quinone oxidoreductase subunit 4L, chloroplastic (101 aa).

3 helical membrane passes run 2–22 (ILEH…YGLI), 32–52 (MCLE…SDFF), and 61–81 (IFSI…LAIV).

Belongs to the complex I subunit 4L family. In terms of assembly, NDH is composed of at least 16 different subunits, 5 of which are encoded in the nucleus.

The protein resides in the plastid. Its subcellular location is the chloroplast thylakoid membrane. The catalysed reaction is a plastoquinone + NADH + (n+1) H(+)(in) = a plastoquinol + NAD(+) + n H(+)(out). The enzyme catalyses a plastoquinone + NADPH + (n+1) H(+)(in) = a plastoquinol + NADP(+) + n H(+)(out). NDH shuttles electrons from NAD(P)H:plastoquinone, via FMN and iron-sulfur (Fe-S) centers, to quinones in the photosynthetic chain and possibly in a chloroplast respiratory chain. The immediate electron acceptor for the enzyme in this species is believed to be plastoquinone. Couples the redox reaction to proton translocation, and thus conserves the redox energy in a proton gradient. The polypeptide is NAD(P)H-quinone oxidoreductase subunit 4L, chloroplastic (Eucalyptus globulus subsp. globulus (Tasmanian blue gum)).